The primary structure comprises 115 residues: NAD(P)H-quinone oxidoreductase subunit M (115 aa).

It belongs to the complex I NdhM subunit family. As to quaternary structure, NDH-1 can be composed of about 15 different subunits; different subcomplexes with different compositions have been identified which probably have different functions.

The protein resides in the cellular thylakoid membrane. It carries out the reaction a plastoquinone + NADH + (n+1) H(+)(in) = a plastoquinol + NAD(+) + n H(+)(out). The enzyme catalyses a plastoquinone + NADPH + (n+1) H(+)(in) = a plastoquinol + NADP(+) + n H(+)(out). Functionally, NDH-1 shuttles electrons from an unknown electron donor, via FMN and iron-sulfur (Fe-S) centers, to quinones in the respiratory and/or the photosynthetic chain. The immediate electron acceptor for the enzyme in this species is believed to be plastoquinone. Couples the redox reaction to proton translocation, and thus conserves the redox energy in a proton gradient. Cyanobacterial NDH-1 also plays a role in inorganic carbon-concentration. The chain is NAD(P)H-quinone oxidoreductase subunit M from Synechococcus sp. (strain WH7803).